Reading from the N-terminus, the 164-residue chain is ATP synthase subunit b (164 aa).

A helical transmembrane segment spans residues 4–24 (LGINPTLFIAQLINFLLLIFI).

Belongs to the ATPase B chain family. F-type ATPases have 2 components, F(1) - the catalytic core - and F(0) - the membrane proton channel. F(1) has five subunits: alpha(3), beta(3), gamma(1), delta(1), epsilon(1). F(0) has four main subunits: a(1), b(2) and c(10-14). The alpha and beta chains form an alternating ring which encloses part of the gamma chain. F(1) is attached to F(0) by a central stalk formed by the gamma and epsilon chains, while a peripheral stalk is formed by the delta and b chains.

The protein resides in the cell membrane. In terms of biological role, f(1)F(0) ATP synthase produces ATP from ADP in the presence of a proton or sodium gradient. F-type ATPases consist of two structural domains, F(1) containing the extramembraneous catalytic core and F(0) containing the membrane proton channel, linked together by a central stalk and a peripheral stalk. During catalysis, ATP synthesis in the catalytic domain of F(1) is coupled via a rotary mechanism of the central stalk subunits to proton translocation. Component of the F(0) channel, it forms part of the peripheral stalk, linking F(1) to F(0). The chain is ATP synthase subunit b from Chloroflexus aurantiacus (strain ATCC 29366 / DSM 635 / J-10-fl).